The primary structure comprises 362 residues: MALSMDNIVISNEEEICMMKAMHLPCGLYLNMVLKAAIELDLFEIIAKSTTQKLSSYEIASQIPTKNPNASSLVLERILRFLASQSLLTCNITKNDDGNVHTTYNLTPLSQSLISDKDGTSIAPFLLLATDPVGVHACFHLKDAILEGEIPFNKAHGVHAFEYHGKDSRMNGLFNKAMQNLTCIEMKRIVECYNGFQGVKEIIDVGGGLGISLASIISKYPNIKGINFDLPHVIKDAPTYEGIEHVGGDMWDSIPQGELIILKAVLHSLDDEDCVKILKNCWRALPNDGKVVVIEQIQPKYPETNLLSKRSFSFDISMMIMFHGGKERTKQQFEDLAKQAGFTYIKVVARAYYSWLIELYKY.

Residue Asp229 coordinates S-adenosyl-L-methionine. His267 acts as the Proton acceptor in catalysis.

Belongs to the class I-like SAM-binding methyltransferase superfamily. Cation-independent O-methyltransferase family. As to quaternary structure, homodimer. Mainly expressed in leaves secreting glandular trichomes types 1 and 4 and, to a lesser extent, in storage trichomes type 6.

The catalysed reaction is myricetin + S-adenosyl-L-methionine = laricitrin + S-adenosyl-L-homocysteine + H(+). The enzyme catalyses laricitrin + S-adenosyl-L-methionine = syringetin + S-adenosyl-L-homocysteine + H(+). It catalyses the reaction a 3'-hydroxyflavone + S-adenosyl-L-methionine = a 3'-methoxyflavone + S-adenosyl-L-homocysteine + H(+). It carries out the reaction a 5'-hydroxy-3'-methoxyflavone + S-adenosyl-L-methionine = a 3',5'-dimethoxyflavone + S-adenosyl-L-homocysteine + H(+). The catalysed reaction is quercetin + S-adenosyl-L-methionine = isorhamnetin + S-adenosyl-L-homocysteine + H(+). The enzyme catalyses rhamnetin + S-adenosyl-L-methionine = rhamnacene + S-adenosyl-L-homocysteine + H(+). It catalyses the reaction 3',4',5,7-tetrahydroxy-3-methoxyflavone + S-adenosyl-L-methionine = 3,3'-O-dimethylquercetin + S-adenosyl-L-homocysteine + H(+). It participates in flavonoid metabolism. In terms of biological role, flavonoid 3'/5'-O-methyltransferase involved in the biosynthesis of polymethoxylated flavonoids natural products such as myricetin derivatives, aroma compounds possessing antioxidant properties and exhibiting pharmacological activities such as anti-carcinogen, anti-viral, anti-thrombotic, anti-diabetic, anti-atherosclerotic, and anti-inflammatory effects. Catalyzes S-adenosylmethionine-dependent regioselective 3'/5'-O-methylation of flavonoids; active on various hydroxylated flavonoid substrates, including myricetin and quercetin, but inactive toward kaempferol. Mediates the formation of 3'-methyl derivatives from quercetin, myricetin, 3-methyl quercetin and 7-methyl quercetin (rhamnetin), producing 3'-methyl quercetin (isorhamnetin), 3'-methyl myricetin (laricitrin), 3,3'-dimethyl quercetin (3-O-methylisorhamnetin) and 7,3'-dimethyl quercetin (7-O-methylisorhamnetin), respectively. Triggers the 5'-O-methylation of 3'-methyl myricetin (laricitrin), thus leading to production of 3',5'-dimethyl myricetin (syringetin). The protein is Myricetin 3'/5'-O-methyltransferase 1 of Solanum habrochaites (Wild tomato).